A 196-amino-acid chain; its full sequence is Large ribosomal subunit protein uL5 (196 aa).

Belongs to the universal ribosomal protein uL5 family. Part of the 50S ribosomal subunit; part of the 5S rRNA/L5/L18/L25 subcomplex. Contacts the 5S rRNA and the P site tRNA. Forms a bridge to the 30S subunit in the 70S ribosome.

Functionally, this is one of the proteins that bind and probably mediate the attachment of the 5S RNA into the large ribosomal subunit, where it forms part of the central protuberance. In the 70S ribosome it contacts protein S13 of the 30S subunit (bridge B1b), connecting the 2 subunits; this bridge is implicated in subunit movement. Contacts the P site tRNA; the 5S rRNA and some of its associated proteins might help stabilize positioning of ribosome-bound tRNAs. In Acidothermus cellulolyticus (strain ATCC 43068 / DSM 8971 / 11B), this protein is Large ribosomal subunit protein uL5.